A 1317-amino-acid polypeptide reads, in one-letter code: DNA-directed RNA polymerase subunit beta' (1317 aa).

Positions 60, 62, 75, and 78 each coordinate Zn(2+). Positions 535, 537, and 539 each coordinate Mg(2+). Zn(2+)-binding residues include C890, C967, C974, and C977.

It belongs to the RNA polymerase beta' chain family. In terms of assembly, the RNAP catalytic core consists of 2 alpha, 1 beta, 1 beta' and 1 omega subunit. When a sigma factor is associated with the core the holoenzyme is formed, which can initiate transcription. It depends on Mg(2+) as a cofactor. Zn(2+) serves as cofactor.

The catalysed reaction is RNA(n) + a ribonucleoside 5'-triphosphate = RNA(n+1) + diphosphate. Functionally, DNA-dependent RNA polymerase catalyzes the transcription of DNA into RNA using the four ribonucleoside triphosphates as substrates. In Nocardia farcinica (strain IFM 10152), this protein is DNA-directed RNA polymerase subunit beta'.